The following is a 134-amino-acid chain: Small ribosomal subunit protein uS9c (134 aa).

Belongs to the universal ribosomal protein uS9 family.

It localises to the plastid. The protein localises to the chloroplast. The polypeptide is Small ribosomal subunit protein uS9c (rps9) (Guillardia theta (Cryptophyte)).